The primary structure comprises 143 residues: MQETECCGVLSYIVGSVFLCVFMLLCGYFLGGRSYSRFKNVPFESGIKSVGDARARFSVKFYLIAMIFVIFDVEGIYLYIWSVSIQETGWIGFIEVCIFVFILLISLIYATYVGVFNWKNRLNEYSRVDSLYIGRSKFFKNDK.

3 helical membrane-spanning segments follow: residues tyrosine 12–glycine 32, phenylalanine 61–tryptophan 81, and tryptophan 90–alanine 110.

It belongs to the complex I subunit 3 family. NDH-1 is composed of 13 different subunits. Subunits NuoA, H, J, K, L, M, N constitute the membrane sector of the complex.

The protein localises to the cell inner membrane. It carries out the reaction a quinone + NADH + 5 H(+)(in) = a quinol + NAD(+) + 4 H(+)(out). NDH-1 shuttles electrons from NADH, via FMN and iron-sulfur (Fe-S) centers, to quinones in the respiratory chain. The immediate electron acceptor for the enzyme in this species is believed to be ubiquinone. Couples the redox reaction to proton translocation (for every two electrons transferred, four hydrogen ions are translocated across the cytoplasmic membrane), and thus conserves the redox energy in a proton gradient. This Blochmanniella floridana protein is NADH-quinone oxidoreductase subunit A.